The sequence spans 172 residues: Translation initiation factor IF-3 (172 aa).

It belongs to the IF-3 family. As to quaternary structure, monomer.

The protein localises to the cytoplasm. In terms of biological role, IF-3 binds to the 30S ribosomal subunit and shifts the equilibrium between 70S ribosomes and their 50S and 30S subunits in favor of the free subunits, thus enhancing the availability of 30S subunits on which protein synthesis initiation begins. The polypeptide is Translation initiation factor IF-3 (Campylobacter curvus (strain 525.92)).